Consider the following 121-residue polypeptide: Flagellar protein FliT (121 aa).

The tract at residues 1 to 50 (MNHAPHLYFAWQQLVEKSQLMLRLATEEQWDELIASEMAYVNAVQEIAHL) is required for homodimerization. Residues 60–98 (MQEQLRPMLRLILDNESKVKQLLQIRMDELAKLVGQSSV) form a fliD binding region.

It belongs to the FliT family. In terms of assembly, homodimer. Interacts with FliD and FlhC.

It localises to the cytoplasm. Its subcellular location is the cytosol. Its function is as follows. Dual-function protein that regulates the transcription of class 2 flagellar operons and that also acts as an export chaperone for the filament-capping protein FliD. As a transcriptional regulator, acts as an anti-FlhDC factor; it directly binds FlhC, thus inhibiting the binding of the FlhC/FlhD complex to class 2 promoters, resulting in decreased expression of class 2 flagellar operons. As a chaperone, effects FliD transition to the membrane by preventing its premature polymerization, and by directing it to the export apparatus. This is Flagellar protein FliT from Escherichia coli O157:H7.